The chain runs to 690 residues: Elongation factor G (690 aa).

One can recognise a tr-type G domain in the interval 8–282 (DKVRNIGIMA…AIVNYLPSPL (275 aa)). GTP contacts are provided by residues 17–24 (AHIDAGKT), 81–85 (DTPGH), and 135–138 (NKMD).

It belongs to the TRAFAC class translation factor GTPase superfamily. Classic translation factor GTPase family. EF-G/EF-2 subfamily.

Its subcellular location is the cytoplasm. Its function is as follows. Catalyzes the GTP-dependent ribosomal translocation step during translation elongation. During this step, the ribosome changes from the pre-translocational (PRE) to the post-translocational (POST) state as the newly formed A-site-bound peptidyl-tRNA and P-site-bound deacylated tRNA move to the P and E sites, respectively. Catalyzes the coordinated movement of the two tRNA molecules, the mRNA and conformational changes in the ribosome. The protein is Elongation factor G of Caldanaerobacter subterraneus subsp. tengcongensis (strain DSM 15242 / JCM 11007 / NBRC 100824 / MB4) (Thermoanaerobacter tengcongensis).